A 130-amino-acid chain; its full sequence is S-adenosylmethionine decarboxylase proenzyme (130 aa).

Ser-64 (schiff-base intermediate with substrate; via pyruvic acid) is an active-site residue. Ser-64 carries the post-translational modification Pyruvic acid (Ser); by autocatalysis. His-69 serves as the catalytic Proton acceptor; for processing activity. The Proton donor; for catalytic activity role is filled by Cys-84.

It belongs to the prokaryotic AdoMetDC family. Type 1 subfamily. As to quaternary structure, heterotetramer of two alpha and two beta chains arranged as a dimer of alpha/beta heterodimers. It depends on pyruvate as a cofactor. In terms of processing, is synthesized initially as an inactive proenzyme. Formation of the active enzyme involves a self-maturation process in which the active site pyruvoyl group is generated from an internal serine residue via an autocatalytic post-translational modification. Two non-identical subunits are generated from the proenzyme in this reaction, and the pyruvate is formed at the N-terminus of the alpha chain, which is derived from the carboxyl end of the proenzyme. The post-translation cleavage follows an unusual pathway, termed non-hydrolytic serinolysis, in which the side chain hydroxyl group of the serine supplies its oxygen atom to form the C-terminus of the beta chain, while the remainder of the serine residue undergoes an oxidative deamination to produce ammonia and the pyruvoyl group blocking the N-terminus of the alpha chain.

The enzyme catalyses S-adenosyl-L-methionine + H(+) = S-adenosyl 3-(methylsulfanyl)propylamine + CO2. Its pathway is amine and polyamine biosynthesis; S-adenosylmethioninamine biosynthesis; S-adenosylmethioninamine from S-adenosyl-L-methionine: step 1/1. In terms of biological role, catalyzes the decarboxylation of S-adenosylmethionine to S-adenosylmethioninamine (dcAdoMet), the propylamine donor required for the synthesis of the polyamines spermine and spermidine from the diamine putrescine. The sequence is that of S-adenosylmethionine decarboxylase proenzyme from Thermoplasma volcanium (strain ATCC 51530 / DSM 4299 / JCM 9571 / NBRC 15438 / GSS1).